A 306-amino-acid polypeptide reads, in one-letter code: Ribonuclease Z (306 aa).

His63, His65, Asp67, His68, His140, Asp211, and His269 together coordinate Zn(2+). The active-site Proton acceptor is the Asp67.

Belongs to the RNase Z family. Homodimer. It depends on Zn(2+) as a cofactor.

The enzyme catalyses Endonucleolytic cleavage of RNA, removing extra 3' nucleotides from tRNA precursor, generating 3' termini of tRNAs. A 3'-hydroxy group is left at the tRNA terminus and a 5'-phosphoryl group is left at the trailer molecule.. Its function is as follows. Zinc phosphodiesterase, which displays some tRNA 3'-processing endonuclease activity. Probably involved in tRNA maturation, by removing a 3'-trailer from precursor tRNA. This chain is Ribonuclease Z, found in Listeria innocua serovar 6a (strain ATCC BAA-680 / CLIP 11262).